Consider the following 207-residue polypeptide: Zinc finger protein JAGGED-like (207 aa).

The segment covering 1–16 (MRADENNTLDLNNLPD) has biased composition (low complexity). Residues 1-20 (MRADENNTLDLNNLPDDPSR) are disordered. A C2H2-type zinc finger spans residues 50-72 (YECRFCSLKFFKSQALGGHMNRH).

Expressed in the emerging leaf, stamen and carpel primordia. Not expressed in the apical shoot meristem (SAM).

The protein resides in the nucleus. Its function is as follows. Acts with JAG to promote growth and patterning in stamens and carpels. Promotes the growth of the abaxial and adaxial sides of floral organs. Promotes the growth of the pollen-bearing microsporangia in anthers, the carpel walls of the gynoecium and the establishment of the correct number of cell layers in carpel walls. Promotes leaf blade growth and trichome development. The chain is Zinc finger protein JAGGED-like (JGL) from Arabidopsis thaliana (Mouse-ear cress).